The following is an 82-amino-acid chain: U1-plectoxin-Pt1a (82 aa).

The first 20 residues, Met-1–Ala-20, serve as a signal peptide directing secretion. Positions Glu-21–Arg-33 are excised as a propeptide. Cystine bridges form between Cys-37–Cys-51, Cys-44–Cys-57, Cys-50–Cys-68, Cys-54–Cys-77, and Cys-59–Cys-66. Ser-79 carries the O-palmitoyl serine lipid modification. A propeptide spanning residues Arg-80–Arg-82 is cleaved from the precursor.

This sequence belongs to the neurotoxin 02 (plectoxin) family. 02 (plectoxin) subfamily. Plectoxin-5 presumably undergoes post-translational modification to give rise to plectoxin-6. Expressed by the venom gland.

The protein localises to the secreted. Its function is as follows. Potent toxin that may paralyze and/or kill insect pests such as H.virescens (lepidoptera), S.exigua (beet armyworm) and M.sexta (tobacco hornworm). The protein is U1-plectoxin-Pt1a of Plectreurys tristis (Spider).